The sequence spans 310 residues: Glutaminase (310 aa).

Positions 67, 118, 161, 168, 192, 244, and 262 each coordinate substrate.

It belongs to the glutaminase family. In terms of assembly, homotetramer.

The catalysed reaction is L-glutamine + H2O = L-glutamate + NH4(+). The polypeptide is Glutaminase (Legionella pneumophila (strain Corby)).